The chain runs to 313 residues: HPr kinase/phosphorylase (313 aa).

Catalysis depends on residues histidine 136 and lysine 157. Residue 151–158 (GDSGIGKS) coordinates ATP. Serine 158 serves as a coordination point for Mg(2+). Aspartate 175 (proton acceptor; for phosphorylation activity. Proton donor; for dephosphorylation activity) is an active-site residue. Residues 199 to 208 (LEIRGLGIIN) are important for the catalytic mechanism of both phosphorylation and dephosphorylation. Position 200 (glutamate 200) interacts with Mg(2+). Arginine 241 is a catalytic residue. Residues 262-267 (PVRPGR) are important for the catalytic mechanism of dephosphorylation.

Belongs to the HPrK/P family. Homohexamer. Requires Mg(2+) as cofactor.

The catalysed reaction is [HPr protein]-L-serine + ATP = [HPr protein]-O-phospho-L-serine + ADP + H(+). It catalyses the reaction [HPr protein]-O-phospho-L-serine + phosphate + H(+) = [HPr protein]-L-serine + diphosphate. In terms of biological role, catalyzes the ATP- as well as the pyrophosphate-dependent phosphorylation of a specific serine residue in HPr, a phosphocarrier protein of the phosphoenolpyruvate-dependent sugar phosphotransferase system (PTS). HprK/P also catalyzes the pyrophosphate-producing, inorganic phosphate-dependent dephosphorylation (phosphorolysis) of seryl-phosphorylated HPr (P-Ser-HPr). The two antagonistic activities of HprK/P are regulated by several intracellular metabolites, which change their concentration in response to the absence or presence of rapidly metabolisable carbon sources (glucose, fructose, etc.) in the growth medium. Therefore, by controlling the phosphorylation state of HPr, HPrK/P is a sensor enzyme that plays a major role in the regulation of carbon metabolism and sugar transport: it mediates carbon catabolite repression (CCR), and regulates PTS-catalyzed carbohydrate uptake and inducer exclusion. This Staphylococcus saprophyticus subsp. saprophyticus (strain ATCC 15305 / DSM 20229 / NCIMB 8711 / NCTC 7292 / S-41) protein is HPr kinase/phosphorylase.